Consider the following 200-residue polypeptide: Recombination protein RecR (200 aa).

The segment at 58-75 adopts a C4-type zinc-finger fold; that stretch reads CSTCFCLKNLPESNCEFC. A Toprim domain is found at 82–177; sequence STLCIVATPK…SISRLALGLP (96 aa).

This sequence belongs to the RecR family.

Functionally, may play a role in DNA repair. It seems to be involved in an RecBC-independent recombinational process of DNA repair. It may act with RecF and RecO. This is Recombination protein RecR from Chlamydia caviae (strain ATCC VR-813 / DSM 19441 / 03DC25 / GPIC) (Chlamydophila caviae).